A 448-amino-acid polypeptide reads, in one-letter code: MEVKYVTVGALTKYIKRKFDVDPHLRDLWVKGEISNFKQHSRGHMYFTLKDSQGRIAAVMFAGYNQHLPFRPEDGMNVLARGEISVYEPNGNYQLYVKEMQPEGVGSLYLAYEQLKQRLEAEGLFSPVHKKPLPAFPRCIGVVTSPTGAAVRDIMTTIRRRYPLAKVILFPALVQGDGAAPSIVRAIERANSFGGVDVLIVGRGGGSIEELWAFNEEIVARAIFASKIPIISAVGHETDFTIADFVADLRAPTPTAAAEMAAPHVGELAERLAERKWRLIRAMKEQLAADKEQLRRLQGSYAFRYPKRLYEQKEQQLDALLERLSRQRERLVDKHRQRLHELDMRLWRHHPAAELERMKERQKAAANALEKAMRTAVERHRFRFRSNLARLEALSPLRIMERGYSLVYNEQGELVKRTNQLRIGEHLSIQVQDGRVDCQVTGVEEKHV.

The protein belongs to the XseA family. Heterooligomer composed of large and small subunits.

The protein resides in the cytoplasm. It catalyses the reaction Exonucleolytic cleavage in either 5'- to 3'- or 3'- to 5'-direction to yield nucleoside 5'-phosphates.. In terms of biological role, bidirectionally degrades single-stranded DNA into large acid-insoluble oligonucleotides, which are then degraded further into small acid-soluble oligonucleotides. The protein is Exodeoxyribonuclease 7 large subunit of Geobacillus kaustophilus (strain HTA426).